A 369-amino-acid polypeptide reads, in one-letter code: Prenyltransferase malB (369 aa).

A substrate-binding site is contributed by E87. Residues R100 and Y189 each contribute to the dimethylallyl diphosphate site. Y191 serves as a coordination point for substrate.

This sequence belongs to the tryptophan dimethylallyltransferase family.

Prenyltransferase; part of the gene cluster that mediates the biosynthesis of malbrancheamide, a dichlorinated fungal indole alkaloid that belongs to a family of natural products containing a characteristic bicyclo[2.2.2]diazaoctane core. The first step of malbrancheamide biosynthesis involves coupling of L-proline and L-tryptophan by malG, a bimodular NRPS, to produce L-Pro-L-Trp aldehyde through reductive offloading. This compound undergoes spontaneous cyclization and dehydration to give a dienamine which is reverse prenylated at C-2 by malE. The other prenyltransferase present in the cluster, malB, displays modest activity, suggesting that may be a redundant gene in the pathway. Subsequently, a [4+2] Diels-Alder cyclo-addition catalyzed by the bifunctional enzyme malC forms the characteristic bicyclo[2.2.2]diazaoctane ring of premalbrancheamid. Finally, the flavin-dependent halogenase malA catalyzes the iterative dichlorination of the indole ring of premalbrancheamide to yield C-9 monochlorinated malbrancheamide B, C-8 monochlorinated isomalbrancheamide B, and dichlorinated malbrancheamide. MalA is also able to brominate premalbrancheamide at C-9 to yield malbrancheamide C, and, to a lesser extend, at C-8 to yield isomalbrancheamide C. Finally, malA can brominate C-9 monochlorinated malbrancheamide B at C-8 to yield malbrancheamide D, or C-8 monochlorinated isomalbrancheamide B at C-9 to produce isomalbrancheamide D. This is Prenyltransferase malB from Malbranchea aurantiaca.